Consider the following 488-residue polypeptide: Probable cytosol aminopeptidase (488 aa).

Mn(2+) contacts are provided by Lys253 and Asp258. Residue Lys265 is part of the active site. Asp276, Asp335, and Glu337 together coordinate Mn(2+). Residue Arg339 is part of the active site.

It belongs to the peptidase M17 family. It depends on Mn(2+) as a cofactor.

The protein localises to the cytoplasm. It catalyses the reaction Release of an N-terminal amino acid, Xaa-|-Yaa-, in which Xaa is preferably Leu, but may be other amino acids including Pro although not Arg or Lys, and Yaa may be Pro. Amino acid amides and methyl esters are also readily hydrolyzed, but rates on arylamides are exceedingly low.. The enzyme catalyses Release of an N-terminal amino acid, preferentially leucine, but not glutamic or aspartic acids.. Its function is as follows. Presumably involved in the processing and regular turnover of intracellular proteins. Catalyzes the removal of unsubstituted N-terminal amino acids from various peptides. This Dinoroseobacter shibae (strain DSM 16493 / NCIMB 14021 / DFL 12) protein is Probable cytosol aminopeptidase.